Consider the following 495-residue polypeptide: Bifunctional protein GlmU (495 aa).

The segment at 1–241 (MTFPGDTAVL…SALVAGVNNR (241 aa)) is pyrophosphorylase. Residues 12–15 (LAAG), Lys26, Gln83, 88–89 (GT), 112–114 (SGD), Gly151, Glu166, Asn181, and Asn239 contribute to the UDP-N-acetyl-alpha-D-glucosamine site. Asp114 is a Mg(2+) binding site. Residue Asn239 coordinates Mg(2+). The tract at residues 242–262 (VQLAQLASELNRRVVAAHQLA) is linker. The interval 263–495 (GVTVVDPATT…TQPPDADQTP (233 aa)) is N-acetyltransferase. UDP-N-acetyl-alpha-D-glucosamine-binding residues include Arg344 and Lys362. His374 (proton acceptor) is an active-site residue. The UDP-N-acetyl-alpha-D-glucosamine site is built by Tyr377 and Asn388. Acetyl-CoA-binding positions include Ala391, 397–398 (NY), Ser416, and Ala434. The interval 457-495 (IENWVQRKRPGSPAAQASKRASEMACQQPTQPPDADQTP) is disordered. Positions 483 to 495 (QQPTQPPDADQTP) are enriched in low complexity.

The protein in the N-terminal section; belongs to the N-acetylglucosamine-1-phosphate uridyltransferase family. In the C-terminal section; belongs to the transferase hexapeptide repeat family. In terms of assembly, homotrimer. Mg(2+) is required as a cofactor.

It localises to the cytoplasm. It catalyses the reaction alpha-D-glucosamine 1-phosphate + acetyl-CoA = N-acetyl-alpha-D-glucosamine 1-phosphate + CoA + H(+). The enzyme catalyses N-acetyl-alpha-D-glucosamine 1-phosphate + UTP + H(+) = UDP-N-acetyl-alpha-D-glucosamine + diphosphate. Its pathway is nucleotide-sugar biosynthesis; UDP-N-acetyl-alpha-D-glucosamine biosynthesis; N-acetyl-alpha-D-glucosamine 1-phosphate from alpha-D-glucosamine 6-phosphate (route II): step 2/2. It participates in nucleotide-sugar biosynthesis; UDP-N-acetyl-alpha-D-glucosamine biosynthesis; UDP-N-acetyl-alpha-D-glucosamine from N-acetyl-alpha-D-glucosamine 1-phosphate: step 1/1. The protein operates within bacterial outer membrane biogenesis; LPS lipid A biosynthesis. Catalyzes the last two sequential reactions in the de novo biosynthetic pathway for UDP-N-acetylglucosamine (UDP-GlcNAc). The C-terminal domain catalyzes the transfer of acetyl group from acetyl coenzyme A to glucosamine-1-phosphate (GlcN-1-P) to produce N-acetylglucosamine-1-phosphate (GlcNAc-1-P), which is converted into UDP-GlcNAc by the transfer of uridine 5-monophosphate (from uridine 5-triphosphate), a reaction catalyzed by the N-terminal domain. This is Bifunctional protein GlmU from Mycobacterium bovis (strain ATCC BAA-935 / AF2122/97).